The primary structure comprises 141 residues: 3-hydroxyacyl-[acyl-carrier-protein] dehydratase FabZ (141 aa).

The active site involves His-48.

The protein belongs to the thioester dehydratase family. FabZ subfamily.

The protein localises to the cytoplasm. It carries out the reaction a (3R)-hydroxyacyl-[ACP] = a (2E)-enoyl-[ACP] + H2O. Involved in unsaturated fatty acids biosynthesis. Catalyzes the dehydration of short chain beta-hydroxyacyl-ACPs and long chain saturated and unsaturated beta-hydroxyacyl-ACPs. The protein is 3-hydroxyacyl-[acyl-carrier-protein] dehydratase FabZ of Streptococcus thermophilus (strain CNRZ 1066).